The following is a 208-amino-acid chain: Uracil phosphoribosyltransferase (208 aa).

5-phospho-alpha-D-ribose 1-diphosphate is bound by residues arginine 78, arginine 103, and 130 to 138 (DPMLATGGS). Uracil is bound by residues isoleucine 193 and 198 to 200 (GDA). Aspartate 199 is a binding site for 5-phospho-alpha-D-ribose 1-diphosphate.

It belongs to the UPRTase family. It depends on Mg(2+) as a cofactor.

It catalyses the reaction UMP + diphosphate = 5-phospho-alpha-D-ribose 1-diphosphate + uracil. It functions in the pathway pyrimidine metabolism; UMP biosynthesis via salvage pathway; UMP from uracil: step 1/1. Its activity is regulated as follows. Allosterically activated by GTP. Catalyzes the conversion of uracil and 5-phospho-alpha-D-ribose 1-diphosphate (PRPP) to UMP and diphosphate. The chain is Uracil phosphoribosyltransferase from Shewanella putrefaciens (strain CN-32 / ATCC BAA-453).